Consider the following 266-residue polypeptide: Probable BRI1 kinase inhibitor 1 (266 aa).

Disordered stretches follow at residues 1–144 and 167–242; these read MTMN…AKTR and FSRH…SEES. Residues 9-30 are compositionally biased toward pro residues; the sequence is RSQPPPPHPPLFKPTTPPPPPL. Over residues 31-40 the composition is skewed to low complexity; it reads LSTSTSTSPP. The segment covering 77 to 93 has biased composition (polar residues); sequence LSHNNYSSKANQHRQTG. Positions 100-109 are enriched in basic and acidic residues; the sequence is SKEKDREYKA. 2 stretches are compositionally biased toward low complexity: residues 210 to 221 and 229 to 241; these read LSSAPASLRASP and VGGS…SSEE.

In terms of biological role, negative regulator of brassinosteroid signaling. The polypeptide is Probable BRI1 kinase inhibitor 1 (BKI1) (Oryza sativa subsp. indica (Rice)).